The following is a 76-amino-acid chain: Translational regulator CsrA (76 aa).

Belongs to the CsrA/RsmA family. As to quaternary structure, homodimer; the beta-strands of each monomer intercalate to form a hydrophobic core, while the alpha-helices form wings that extend away from the core.

It is found in the cytoplasm. A translational regulator that binds mRNA to regulate translation initiation and/or mRNA stability. Usually binds in the 5'-UTR at or near the Shine-Dalgarno sequence preventing ribosome-binding, thus repressing translation. Its main target seems to be the major flagellin gene, while its function is anatagonized by FliW. The polypeptide is Translational regulator CsrA (Helicobacter pylori (strain P12)).